The sequence spans 550 residues: Glycosyltransferase-like protein gnt12 (550 aa).

Residues methionine 1–glutamate 29 are disordered. Topologically, residues methionine 1–proline 36 are cytoplasmic. Residues asparagine 8–asparagine 25 are compositionally biased toward low complexity. A helical; Signal-anchor for type II membrane protein transmembrane segment spans residues phenylalanine 37–methionine 57. At glutamate 58–cysteine 550 the chain is on the extracellular side. The segment covering leucine 81–proline 97 has biased composition (low complexity). A disordered region spans residues leucine 81–histidine 100. Residues asparagine 233, asparagine 322, and asparagine 426 are each glycosylated (N-linked (GlcNAc...) asparagine).

It belongs to the glycosyltransferase 8 family. Highly divergent.

Its subcellular location is the membrane. The sequence is that of Glycosyltransferase-like protein gnt12 (gnt12) from Dictyostelium discoideum (Social amoeba).